The sequence spans 292 residues: Formamidopyrimidine-DNA glycosylase (292 aa).

P2 functions as the Schiff-base intermediate with DNA in the catalytic mechanism. E3 serves as the catalytic Proton donor. The Proton donor; for beta-elimination activity role is filled by K60. DNA-binding residues include H109, R128, and K173. The FPG-type zinc finger occupies 258–292 (NVYRRTGKKCRQCKNLIERQKISGRSTHWCRKCQK). The active-site Proton donor; for delta-elimination activity is the R282.

This sequence belongs to the FPG family. Monomer. Requires Zn(2+) as cofactor.

It catalyses the reaction Hydrolysis of DNA containing ring-opened 7-methylguanine residues, releasing 2,6-diamino-4-hydroxy-5-(N-methyl)formamidopyrimidine.. It carries out the reaction 2'-deoxyribonucleotide-(2'-deoxyribose 5'-phosphate)-2'-deoxyribonucleotide-DNA = a 3'-end 2'-deoxyribonucleotide-(2,3-dehydro-2,3-deoxyribose 5'-phosphate)-DNA + a 5'-end 5'-phospho-2'-deoxyribonucleoside-DNA + H(+). Involved in base excision repair of DNA damaged by oxidation or by mutagenic agents. Acts as a DNA glycosylase that recognizes and removes damaged bases. Has a preference for oxidized purines, such as 7,8-dihydro-8-oxoguanine (8-oxoG). Has AP (apurinic/apyrimidinic) lyase activity and introduces nicks in the DNA strand. Cleaves the DNA backbone by beta-delta elimination to generate a single-strand break at the site of the removed base with both 3'- and 5'-phosphates. The sequence is that of Formamidopyrimidine-DNA glycosylase from Prochlorococcus marinus subsp. pastoris (strain CCMP1986 / NIES-2087 / MED4).